The primary structure comprises 560 residues: Chaperonin GroEL 2 (560 aa).

ATP is bound by residues 29 to 32, 86 to 90, Gly413, 478 to 480, and Asp494; these read TLGP, DGTTT, and NAA.

The protein belongs to the chaperonin (HSP60) family. As to quaternary structure, forms a cylinder of 14 subunits composed of two heptameric rings stacked back-to-back. Interacts with the co-chaperonin GroES.

It is found in the cytoplasm. The catalysed reaction is ATP + H2O + a folded polypeptide = ADP + phosphate + an unfolded polypeptide.. Together with its co-chaperonin GroES, plays an essential role in assisting protein folding. The GroEL-GroES system forms a nano-cage that allows encapsulation of the non-native substrate proteins and provides a physical environment optimized to promote and accelerate protein folding. The chain is Chaperonin GroEL 2 from Trichormus variabilis (strain ATCC 29413 / PCC 7937) (Anabaena variabilis).